A 305-amino-acid chain; its full sequence is Oxygen-dependent coproporphyrinogen-III oxidase (305 aa).

Serine 97 contributes to the substrate binding site. Positions 101 and 111 each coordinate a divalent metal cation. Histidine 111 serves as the catalytic Proton donor. 113–115 serves as a coordination point for substrate; it reads NVR. A divalent metal cation is bound by residues histidine 150 and histidine 180. Positions 245-280 are important for dimerization; the sequence is YVEFNLVWDRGTHFGLQSGGRTESILLSMPPLASWA. A substrate-binding site is contributed by 263–265; the sequence is GGR.

This sequence belongs to the aerobic coproporphyrinogen-III oxidase family. As to quaternary structure, homodimer. The cofactor is a divalent metal cation.

The protein resides in the cytoplasm. It carries out the reaction coproporphyrinogen III + O2 + 2 H(+) = protoporphyrinogen IX + 2 CO2 + 2 H2O. It participates in porphyrin-containing compound metabolism; protoporphyrin-IX biosynthesis; protoporphyrinogen-IX from coproporphyrinogen-III (O2 route): step 1/1. Its function is as follows. Involved in the heme biosynthesis. Catalyzes the aerobic oxidative decarboxylation of propionate groups of rings A and B of coproporphyrinogen-III to yield the vinyl groups in protoporphyrinogen-IX. This chain is Oxygen-dependent coproporphyrinogen-III oxidase, found in Variovorax paradoxus (strain S110).